The chain runs to 155 residues: Deoxyuridine 5'-triphosphate nucleotidohydrolase (155 aa).

Substrate contacts are provided by residues 74–76 (RSG), Asn87, and 91–93 (TID).

This sequence belongs to the dUTPase family. It depends on Mg(2+) as a cofactor.

The enzyme catalyses dUTP + H2O = dUMP + diphosphate + H(+). It participates in pyrimidine metabolism; dUMP biosynthesis; dUMP from dCTP (dUTP route): step 2/2. This enzyme is involved in nucleotide metabolism: it produces dUMP, the immediate precursor of thymidine nucleotides and it decreases the intracellular concentration of dUTP so that uracil cannot be incorporated into DNA. The protein is Deoxyuridine 5'-triphosphate nucleotidohydrolase of Cereibacter sphaeroides (strain KD131 / KCTC 12085) (Rhodobacter sphaeroides).